A 304-amino-acid polypeptide reads, in one-letter code: CBY1-interacting BAR domain-containing protein 2 (304 aa).

Residues 6-217 (SRDSQVRVME…EKYDLERDLL (212 aa)) form a BAR-like region.

This sequence belongs to the CIBAR family. Homodimer (via BAR-like domain). Heterodimer (via BAR-like domain) with FAM92A. Interacts with CBY1. Restricted to certain tissues, most prominently expressed in multicilaited tissues.

It is found in the cytoplasm. It localises to the cytoskeleton. The protein localises to the microtubule organizing center. Its subcellular location is the centrosome. The protein resides in the centriole. It is found in the cilium basal body. Its function is as follows. May play a role in ciliogenesis. In cooperation with CBY1 may facilitate ciliogenesis likely by the recruitment and fusion of endosomal vesicles at distal appendages during early stages of ciliogenesis. In Homo sapiens (Human), this protein is CBY1-interacting BAR domain-containing protein 2.